Reading from the N-terminus, the 428-residue chain is MSAIVDIVGREILDSRGNPTVECDVLLESGVMGRAAVPSGASTGSREAIELRDGDKSRYLGKGVLKAVGYINNEISEAVLGLDASEQAFLDRTLIELDGTENKSRLGANAMLAVSMAVARAAAEEAGLPLYRYFGGMAAVQMPVPMMNVINGGEHANNNLDLQELMIIPLGAPSFREALRYGAEVFHALKKILHDKGISTAVGDEGGFAPNVPGGHEAAIQMILEAIDKAGYVAGEQIALGLDCAASEFYKDGKYELSGEGLSLSAQEWTDMLATWVDKYPIISIEDGMAEGDWDGWKILTDRLGKNVQIVGDDLFVTNTKILKEGIDKGIANSILIKINQIGTLTETFAAIEMAKRAGYTAVISHRSGETEDSTIADIAVGTNAGQIKTGSLSRSDRMAKYNQLLRIEEDLGEVASYPGRSAFYNLR.

Gln-163 contributes to the (2R)-2-phosphoglycerate binding site. The active-site Proton donor is Glu-205. Mg(2+)-binding residues include Asp-243, Glu-286, and Asp-313. (2R)-2-phosphoglycerate-binding residues include Lys-338, Arg-367, Ser-368, and Lys-389. Lys-338 serves as the catalytic Proton acceptor.

It belongs to the enolase family. Requires Mg(2+) as cofactor.

The protein localises to the cytoplasm. It localises to the secreted. It is found in the cell surface. It catalyses the reaction (2R)-2-phosphoglycerate = phosphoenolpyruvate + H2O. Its pathway is carbohydrate degradation; glycolysis; pyruvate from D-glyceraldehyde 3-phosphate: step 4/5. Catalyzes the reversible conversion of 2-phosphoglycerate (2-PG) into phosphoenolpyruvate (PEP). It is essential for the degradation of carbohydrates via glycolysis. The chain is Enolase from Polaromonas naphthalenivorans (strain CJ2).